We begin with the raw amino-acid sequence, 184 residues long: GTP cyclohydrolase 1 (184 aa).

3 residues coordinate Zn(2+): C75, H78, and C146.

This sequence belongs to the GTP cyclohydrolase I family. As to quaternary structure, homomer.

It catalyses the reaction GTP + H2O = 7,8-dihydroneopterin 3'-triphosphate + formate + H(+). Its pathway is cofactor biosynthesis; 7,8-dihydroneopterin triphosphate biosynthesis; 7,8-dihydroneopterin triphosphate from GTP: step 1/1. In Teredinibacter turnerae (strain ATCC 39867 / T7901), this protein is GTP cyclohydrolase 1.